Consider the following 290-residue polypeptide: 4-hydroxy-tetrahydrodipicolinate synthase (290 aa).

Thr44 is a pyruvate binding site. Residue Tyr132 is the Proton donor/acceptor of the active site. Lys160 acts as the Schiff-base intermediate with substrate in catalysis. Position 202 (Ile202) interacts with pyruvate.

It belongs to the DapA family. Homotetramer; dimer of dimers.

The protein localises to the cytoplasm. It catalyses the reaction L-aspartate 4-semialdehyde + pyruvate = (2S,4S)-4-hydroxy-2,3,4,5-tetrahydrodipicolinate + H2O + H(+). It participates in amino-acid biosynthesis; L-lysine biosynthesis via DAP pathway; (S)-tetrahydrodipicolinate from L-aspartate: step 3/4. Its function is as follows. Catalyzes the condensation of (S)-aspartate-beta-semialdehyde [(S)-ASA] and pyruvate to 4-hydroxy-tetrahydrodipicolinate (HTPA). This is 4-hydroxy-tetrahydrodipicolinate synthase from Legionella pneumophila subsp. pneumophila (strain Philadelphia 1 / ATCC 33152 / DSM 7513).